The chain runs to 202 residues: Holliday junction branch migration complex subunit RuvA (202 aa).

The domain I stretch occupies residues 1-64 (MIGRLRGTLA…EDAQLLYGFA (64 aa)). Residues 65-143 (GKRERDFFRE…AWETSPAMFA (79 aa)) are domain II. Residues 144 to 154 (LVPNQPDGPAP) form a flexible linker region. The tract at residues 154–202 (PVNTAENDAVSALISLGYKPQEASKAISAIKEKGLSSEDMIRRALKGMI) is domain III.

It belongs to the RuvA family. As to quaternary structure, homotetramer. Forms an RuvA(8)-RuvB(12)-Holliday junction (HJ) complex. HJ DNA is sandwiched between 2 RuvA tetramers; dsDNA enters through RuvA and exits via RuvB. An RuvB hexamer assembles on each DNA strand where it exits the tetramer. Each RuvB hexamer is contacted by two RuvA subunits (via domain III) on 2 adjacent RuvB subunits; this complex drives branch migration. In the full resolvosome a probable DNA-RuvA(4)-RuvB(12)-RuvC(2) complex forms which resolves the HJ.

The protein localises to the cytoplasm. Its function is as follows. The RuvA-RuvB-RuvC complex processes Holliday junction (HJ) DNA during genetic recombination and DNA repair, while the RuvA-RuvB complex plays an important role in the rescue of blocked DNA replication forks via replication fork reversal (RFR). RuvA specifically binds to HJ cruciform DNA, conferring on it an open structure. The RuvB hexamer acts as an ATP-dependent pump, pulling dsDNA into and through the RuvAB complex. HJ branch migration allows RuvC to scan DNA until it finds its consensus sequence, where it cleaves and resolves the cruciform DNA. The protein is Holliday junction branch migration complex subunit RuvA of Pseudomonas fluorescens (strain Pf0-1).